A 273-amino-acid chain; its full sequence is Dermonecrotic toxin LhSicTox-alphaIA2av (273 aa).

Histidine 5 is an active-site residue. Positions 25 and 27 each coordinate Mg(2+). Histidine 41 serves as the catalytic Nucleophile. 2 cysteine pairs are disulfide-bonded: cysteine 45-cysteine 51 and cysteine 47-cysteine 190. Residue aspartate 85 coordinates Mg(2+).

This sequence belongs to the arthropod phospholipase D family. Class II subfamily. It depends on Mg(2+) as a cofactor. As to expression, expressed by the venom gland.

Its subcellular location is the secreted. The catalysed reaction is an N-(acyl)-sphingosylphosphocholine = an N-(acyl)-sphingosyl-1,3-cyclic phosphate + choline. It carries out the reaction an N-(acyl)-sphingosylphosphoethanolamine = an N-(acyl)-sphingosyl-1,3-cyclic phosphate + ethanolamine. It catalyses the reaction a 1-acyl-sn-glycero-3-phosphocholine = a 1-acyl-sn-glycero-2,3-cyclic phosphate + choline. The enzyme catalyses a 1-acyl-sn-glycero-3-phosphoethanolamine = a 1-acyl-sn-glycero-2,3-cyclic phosphate + ethanolamine. In terms of biological role, dermonecrotic toxins cleave the phosphodiester linkage between the phosphate and headgroup of certain phospholipids (sphingolipid and lysolipid substrates), forming an alcohol (often choline) and a cyclic phosphate. This toxin acts on sphingomyelin (SM). It may also act on ceramide phosphoethanolamine (CPE), lysophosphatidylcholine (LPC) and lysophosphatidylethanolamine (LPE), but not on lysophosphatidylserine (LPS), and lysophosphatidylglycerol (LPG). It acts by transphosphatidylation, releasing exclusively cyclic phosphate products as second products. Induces dermonecrosis, hemolysis, increased vascular permeability, edema, inflammatory response, and platelet aggregation. In Loxosceles hirsuta (Recluse spider), this protein is Dermonecrotic toxin LhSicTox-alphaIA2av.